A 572-amino-acid chain; its full sequence is Urease subunit alpha (572 aa).

The region spanning 133 to 572 (GGIDLHVHYI…TSLSQRYFLF (440 aa)) is the Urease domain. Residues H138, H140, and K221 each coordinate Ni(2+). N6-carboxylysine is present on K221. Residue H223 participates in substrate binding. Residues H250 and H276 each contribute to the Ni(2+) site. Residue H324 is the Proton donor of the active site. D364 is a binding site for Ni(2+).

The protein belongs to the metallo-dependent hydrolases superfamily. Urease alpha subunit family. As to quaternary structure, heterotrimer of UreA (gamma), UreB (beta) and UreC (alpha) subunits. Three heterotrimers associate to form the active enzyme. Ni cation is required as a cofactor. In terms of processing, carboxylation allows a single lysine to coordinate two nickel ions.

It localises to the cytoplasm. It catalyses the reaction urea + 2 H2O + H(+) = hydrogencarbonate + 2 NH4(+). The protein operates within nitrogen metabolism; urea degradation; CO(2) and NH(3) from urea (urease route): step 1/1. In Streptococcus thermophilus (strain CNRZ 1066), this protein is Urease subunit alpha.